A 246-amino-acid polypeptide reads, in one-letter code: Probable septum site-determining protein MinC (246 aa).

Belongs to the MinC family. Interacts with MinD and FtsZ.

Its function is as follows. Cell division inhibitor that blocks the formation of polar Z ring septums. Rapidly oscillates between the poles of the cell to destabilize FtsZ filaments that have formed before they mature into polar Z rings. Prevents FtsZ polymerization. This is Probable septum site-determining protein MinC from Pseudomonas syringae pv. syringae (strain B728a).